Here is a 623-residue protein sequence, read N- to C-terminus: MTIRHLSETIINQIAAGEVIERPASVIKELVENAIDAGATRIEVVTAGGGKTLLRVTDNGSGIPADELALAVSRHCTSKLTDDVHDIRALGFRGEALPSIGSVSKLTLKSRPQDADSGFEVCVTGGHLDGPRPTALNRGTIVEVRDLFYATPARLKFMKTDRAEATAITDVVKRIGIAFPHIRFSLAGTDRTPFEMPATGTGAEATLERIGQVLGREFGENALAIDAERDGVRLAGFVGIPSFNRGNALHQFAYVNGRPVRDKQIFGALRGAYSDVIARDRHPVAVLFLTLDPALVDVNVHPAKADVRFRDPGLVRGLIVGAIKQALAQSGIRPATSGAEAMLQAFRAEGFGAQQSAPRPANSYSPASWRTAPPAPRSEWSPQTAHPAHRPLDLQAAPALRENGQAVLGDVAVPAADARASVAEAPVELMQKPLGAARAQIHENYIVAQTEDSLVIVDQHAAHERLVYEALKNALHARPIAGQMLLIPEIVDLPEEDAQRLAGHAETLARFGLGVEQFGPGAIAVRETPAMLGEMNVQQLIRDLADEIAEHDTADGLKAMLHHVAATMACHGSVRSGRRLKPEEMNALLRDMEATPGSGTCNHGRPTYIELKLTDIERLFGRR.

Polar residues predominate over residues Ala-353–Ser-368. The interval Ala-353–His-389 is disordered.

The protein belongs to the DNA mismatch repair MutL/HexB family.

This protein is involved in the repair of mismatches in DNA. It is required for dam-dependent methyl-directed DNA mismatch repair. May act as a 'molecular matchmaker', a protein that promotes the formation of a stable complex between two or more DNA-binding proteins in an ATP-dependent manner without itself being part of a final effector complex. The protein is DNA mismatch repair protein MutL of Brucella melitensis biotype 1 (strain ATCC 23456 / CCUG 17765 / NCTC 10094 / 16M).